The sequence spans 123 residues: Large ribosomal subunit protein uL14c (123 aa).

It belongs to the universal ribosomal protein uL14 family. In terms of assembly, part of the 50S ribosomal subunit.

The protein localises to the plastid. Its subcellular location is the chloroplast. In terms of biological role, binds to 23S rRNA. The sequence is that of Large ribosomal subunit protein uL14c from Triticum aestivum (Wheat).